Consider the following 351-residue polypeptide: Ion-translocating oxidoreductase complex subunit D (351 aa).

The next 4 helical transmembrane spans lie at 20–40 (IMLL…YFFG), 44–64 (LIQV…TLSL), 89–109 (LPPL…IIIA), and 123–143 (PAMI…TSWL). The residue at position 187 (T187) is an FMN phosphoryl threonine. Transmembrane regions (helical) follow at residues 215-235 (LSGI…LFLL), 244-264 (IPVS…VIAP), 267-287 (FAPP…FFIA), 301-321 (LIFG…GGYP), and 322-342 (DGVA…DYYT).

Belongs to the NqrB/RnfD family. The complex is composed of six subunits: RnfA, RnfB, RnfC, RnfD, RnfE and RnfG. FMN serves as cofactor.

It is found in the cell inner membrane. Its function is as follows. Part of a membrane-bound complex that couples electron transfer with translocation of ions across the membrane. The chain is Ion-translocating oxidoreductase complex subunit D from Pectobacterium carotovorum subsp. carotovorum (strain PC1).